Reading from the N-terminus, the 106-residue chain is Nucleoid-associated protein bll8115 (106 aa).

Belongs to the YbaB/EbfC family. As to quaternary structure, homodimer.

The protein resides in the cytoplasm. The protein localises to the nucleoid. Functionally, binds to DNA and alters its conformation. May be involved in regulation of gene expression, nucleoid organization and DNA protection. The protein is Nucleoid-associated protein bll8115 of Bradyrhizobium diazoefficiens (strain JCM 10833 / BCRC 13528 / IAM 13628 / NBRC 14792 / USDA 110).